The following is a 160-amino-acid chain: Regulatory protein RecX (160 aa).

It belongs to the RecX family.

It is found in the cytoplasm. Its function is as follows. Modulates RecA activity. In Xanthomonas oryzae pv. oryzae (strain MAFF 311018), this protein is Regulatory protein RecX.